The sequence spans 377 residues: MVDTSKIKALKEKSRRTVKSGSLKFILIILVVVIVGLLAFIAYNEISNLQFQEKITLENQKKAAIESINQMFAKYPNDPQKLIYINKIQMANNIEEINEVLEEAKKYISFKNYKIEAINQIKSMYGEYYSLSLSAQELVHKISLAQSTEEIENLLKSVDIEKDIRSIIEKQIDYVLASGDKYYYVEINGKSMFMTRDEILKYKKFWTLSELKSLKITPVSQLNKVAIEISAKQCGKLPHKGDIISIYSKDGSFITYGIIDSSYVILSSISYSESKSTSSNINELGESYSSSSSSSISYSLNNLPGILHATVIDRLDYDKIKKMFGEYGKKLNEIEDDTQIFDENVNYFLIISIPDDKIPDIIQIDPKDIVIVIKSKE.

Helical transmembrane passes span 23-43 (LKFILIILVVVIVGLLAFIAY) and 251-271 (GSFITYGIIDSSYVILSSISY).

The protein localises to the cell membrane. This is an uncharacterized protein from Methanocaldococcus jannaschii (strain ATCC 43067 / DSM 2661 / JAL-1 / JCM 10045 / NBRC 100440) (Methanococcus jannaschii).